The primary structure comprises 89 residues: Small ribosomal subunit protein uS15 (89 aa).

The protein belongs to the universal ribosomal protein uS15 family. Part of the 30S ribosomal subunit. Forms a bridge to the 50S subunit in the 70S ribosome, contacting the 23S rRNA.

In terms of biological role, one of the primary rRNA binding proteins, it binds directly to 16S rRNA where it helps nucleate assembly of the platform of the 30S subunit by binding and bridging several RNA helices of the 16S rRNA. Functionally, forms an intersubunit bridge (bridge B4) with the 23S rRNA of the 50S subunit in the ribosome. The sequence is that of Small ribosomal subunit protein uS15 from Pectobacterium atrosepticum (strain SCRI 1043 / ATCC BAA-672) (Erwinia carotovora subsp. atroseptica).